A 178-amino-acid chain; its full sequence is ATP-dependent protease subunit HslV (178 aa).

Residue Thr7 is part of the active site. Residues Gly162, Cys165, and Thr168 each coordinate Na(+).

This sequence belongs to the peptidase T1B family. HslV subfamily. As to quaternary structure, a double ring-shaped homohexamer of HslV is capped on each side by a ring-shaped HslU homohexamer. The assembly of the HslU/HslV complex is dependent on binding of ATP.

Its subcellular location is the cytoplasm. The catalysed reaction is ATP-dependent cleavage of peptide bonds with broad specificity.. Its activity is regulated as follows. Allosterically activated by HslU binding. Protease subunit of a proteasome-like degradation complex believed to be a general protein degrading machinery. This is ATP-dependent protease subunit HslV from Cupriavidus taiwanensis (strain DSM 17343 / BCRC 17206 / CCUG 44338 / CIP 107171 / LMG 19424 / R1) (Ralstonia taiwanensis (strain LMG 19424)).